A 191-amino-acid chain; its full sequence is Protein GrpE (191 aa).

Composition is skewed to basic and acidic residues over residues 1–19 (MKDEHNQEHDHLSPKEPES) and 29–45 (QQGEEKQEASEKEGEIK). The segment at 1–45 (MKDEHNQEHDHLSPKEPESYQKAYACKEQQGEEKQEASEKEGEIK) is disordered.

Belongs to the GrpE family. Homodimer.

It localises to the cytoplasm. Its function is as follows. Participates actively in the response to hyperosmotic and heat shock by preventing the aggregation of stress-denatured proteins, in association with DnaK and GrpE. It is the nucleotide exchange factor for DnaK and may function as a thermosensor. Unfolded proteins bind initially to DnaJ; upon interaction with the DnaJ-bound protein, DnaK hydrolyzes its bound ATP, resulting in the formation of a stable complex. GrpE releases ADP from DnaK; ATP binding to DnaK triggers the release of the substrate protein, thus completing the reaction cycle. Several rounds of ATP-dependent interactions between DnaJ, DnaK and GrpE are required for fully efficient folding. This Helicobacter pylori (strain J99 / ATCC 700824) (Campylobacter pylori J99) protein is Protein GrpE.